The primary structure comprises 477 residues: 3-isopropylmalate dehydratase large subunit (477 aa).

[4Fe-4S] cluster-binding residues include Cys-351, Cys-411, and Cys-414.

It belongs to the aconitase/IPM isomerase family. LeuC type 1 subfamily. Heterodimer of LeuC and LeuD. It depends on [4Fe-4S] cluster as a cofactor.

The enzyme catalyses (2R,3S)-3-isopropylmalate = (2S)-2-isopropylmalate. Its pathway is amino-acid biosynthesis; L-leucine biosynthesis; L-leucine from 3-methyl-2-oxobutanoate: step 2/4. In terms of biological role, catalyzes the isomerization between 2-isopropylmalate and 3-isopropylmalate, via the formation of 2-isopropylmaleate. This chain is 3-isopropylmalate dehydratase large subunit, found in Kineococcus radiotolerans (strain ATCC BAA-149 / DSM 14245 / SRS30216).